The sequence spans 94 residues: Co-chaperonin GroES (94 aa).

Belongs to the GroES chaperonin family. As to quaternary structure, heptamer of 7 subunits arranged in a ring. Interacts with the chaperonin GroEL.

The protein resides in the cytoplasm. Together with the chaperonin GroEL, plays an essential role in assisting protein folding. The GroEL-GroES system forms a nano-cage that allows encapsulation of the non-native substrate proteins and provides a physical environment optimized to promote and accelerate protein folding. GroES binds to the apical surface of the GroEL ring, thereby capping the opening of the GroEL channel. In Lactococcus lactis subsp. cremoris (strain SK11), this protein is Co-chaperonin GroES.